The primary structure comprises 422 residues: Serine--tRNA ligase (422 aa).

T229–E231 contacts L-serine. Residue R260–E262 participates in ATP binding. L-serine is bound at residue E283. E347 to S350 is a binding site for ATP. S383 is a binding site for L-serine.

This sequence belongs to the class-II aminoacyl-tRNA synthetase family. Type-1 seryl-tRNA synthetase subfamily. Homodimer. The tRNA molecule binds across the dimer.

Its subcellular location is the cytoplasm. It carries out the reaction tRNA(Ser) + L-serine + ATP = L-seryl-tRNA(Ser) + AMP + diphosphate + H(+). The enzyme catalyses tRNA(Sec) + L-serine + ATP = L-seryl-tRNA(Sec) + AMP + diphosphate + H(+). It functions in the pathway aminoacyl-tRNA biosynthesis; selenocysteinyl-tRNA(Sec) biosynthesis; L-seryl-tRNA(Sec) from L-serine and tRNA(Sec): step 1/1. Catalyzes the attachment of serine to tRNA(Ser). Is also able to aminoacylate tRNA(Sec) with serine, to form the misacylated tRNA L-seryl-tRNA(Sec), which will be further converted into selenocysteinyl-tRNA(Sec). The sequence is that of Serine--tRNA ligase from Heliobacterium modesticaldum (strain ATCC 51547 / Ice1).